A 672-amino-acid chain; its full sequence is Zinc finger and BTB domain-containing protein 24 (672 aa).

Residues 39–105 enclose the BTB domain; it reads CDITLIVEDV…MYSAVVLVDE (67 aa). A disordered region spans residues 136–208; sequence HMQVKRKRGR…GKRKIKQPIR (73 aa). Residues 140–152 constitute a DNA-binding region (a.T hook 1); the sequence is KRKRGRPKKNQDL. The span at 148-158 shows a compositional bias: basic and acidic residues; that stretch reads KNQDLSQKENP. Residues 160–171 are compositionally biased toward polar residues; the sequence is SELQAQTSSEIQ. The segment covering 198 to 208 has biased composition (basic residues); it reads EGKRKIKQPIR. A DNA-binding region (a.T hook 2) is located at residues 223-235; the sequence is PGKRGRRRKYPDT. 8 C2H2-type zinc fingers span residues 237-259, 265-287, 293-315, 321-343, 349-371, 377-399, 405-427, and 433-455; these read ARCE…QRTH, FRCS…QRMH, YICT…MNLH, FTCE…NRVH, PECA…LRTH, FTCE…IRIH, YVCK…EVSH, and FSCS…IKTH. Residues 453–492 are disordered; it reads KTHNKENPPAQAESTDKPPQSAPEQQEQEQQQQQQTSGDK. Residues 476–487 show a composition bias toward low complexity; it reads EQQEQEQQQQQQ.

It belongs to the krueppel C2H2-type zinc-finger protein family.

It is found in the nucleus. In terms of biological role, may be involved in BMP2-induced transcription. In Danio rerio (Zebrafish), this protein is Zinc finger and BTB domain-containing protein 24 (zbtb24).